The following is a 90-amino-acid chain: Small ribosomal subunit protein uS15 (90 aa).

This sequence belongs to the universal ribosomal protein uS15 family. Part of the 30S ribosomal subunit. Forms a bridge to the 50S subunit in the 70S ribosome, contacting the 23S rRNA.

One of the primary rRNA binding proteins, it binds directly to 16S rRNA where it helps nucleate assembly of the platform of the 30S subunit by binding and bridging several RNA helices of the 16S rRNA. Functionally, forms an intersubunit bridge (bridge B4) with the 23S rRNA of the 50S subunit in the ribosome. This Tropheryma whipplei (strain TW08/27) (Whipple's bacillus) protein is Small ribosomal subunit protein uS15.